The sequence spans 570 residues: Methionine--tRNA ligase (570 aa).

The 'HIGH' region signature appears at 11–21; it reads PYVQTVPHLGN. Zn(2+)-binding residues include Cys143, Cys146, Cys156, and Cys159. Positions 333–337 match the 'KMSKS' region motif; sequence KFSKS. Residue Lys336 coordinates ATP.

It belongs to the class-I aminoacyl-tRNA synthetase family. MetG type 1 subfamily. Zn(2+) is required as a cofactor.

The protein resides in the cytoplasm. The enzyme catalyses tRNA(Met) + L-methionine + ATP = L-methionyl-tRNA(Met) + AMP + diphosphate. Is required not only for elongation of protein synthesis but also for the initiation of all mRNA translation through initiator tRNA(fMet) aminoacylation. The protein is Methionine--tRNA ligase of Pyrobaculum aerophilum (strain ATCC 51768 / DSM 7523 / JCM 9630 / CIP 104966 / NBRC 100827 / IM2).